We begin with the raw amino-acid sequence, 262 residues long: uncharacterized protein (262 aa).

Residues H7, H9, E96, H132, H156, and D211 each coordinate a divalent metal cation.

The protein belongs to the metallo-dependent hydrolases superfamily. TatD-type hydrolase family. A divalent metal cation is required as a cofactor.

This is an uncharacterized protein from Mycoplasma genitalium (strain ATCC 33530 / DSM 19775 / NCTC 10195 / G37) (Mycoplasmoides genitalium).